We begin with the raw amino-acid sequence, 448 residues long: MAHVGDCKWMSWLPVLVVSLMCSAKAEDSNCGENEYHNQTTGLCQQCPPCRPGEEPYMSCGYGTKDDDYGCVPCPAEKFSKGGYQICRRHKDCEGFFRATVLTPGDMENDAECGPCLPGYYMLENRPRNIYGMVCYSCLLAPPNTKECVGATSGVSAHSSSTSGGSTLSPFQHAHKELSGQGHLATALIIAMSTIFIMAIAIVLIIMFYIMKTKPSAPACCSSPPGKSAEAPANTHEEKKEAPDSVVTFPENGEFQKLTATPTKTPKSENDASSENEQLLSRSVDSDEEPAPDKQGSPELCLLSLVHLAREKSVTSNKSAGIQSRRKKILDVYANVCGVVEGLSPTELPFDCLEKTSRMLSSTYNSEKAVVKTWRHLAESFGLKRDEIGGMTDGMQLFDRISTAGYSIPELLTKLVQIERLDAVESLCADILEWAGVVPPASPPPAAS.

The first 26 residues, 1 to 26 (MAHVGDCKWMSWLPVLVVSLMCSAKA), serve as a signal peptide directing secretion. The Extracellular portion of the chain corresponds to 27 to 187 (EDSNCGENEY…LSGQGHLATA (161 aa)). TNFR-Cys repeat units lie at residues 30 to 71 (NCGE…DYGC), 73 to 113 (PCPA…DAEC), and 115 to 150 (PCLPGYYMLENRPRNIYGMVCYSCLLAPPNTKECVG). 6 disulfide bridges follow: Cys31/Cys44, Cys47/Cys60, Cys50/Cys71, Cys74/Cys87, Cys93/Cys113, and Cys135/Cys148. N-linked (GlcNAc...) asparagine glycosylation is present at Asn38. The helical transmembrane segment at 188-208 (LIIAMSTIFIMAIAIVLIIMF) threads the bilayer. Residues 209–448 (YIMKTKPSAP…PPASPPPAAS (240 aa)) are Cytoplasmic-facing. The segment covering 220 to 229 (CCSSPPGKSA) has biased composition (low complexity). The interval 220–297 (CCSSPPGKSA…EEPAPDKQGS (78 aa)) is disordered. Residues 258–283 (LTATPTKTPKSENDASSENEQLLSRS) show a composition bias toward polar residues. The 74-residue stretch at 358–431 (RMLSSTYNSE…DAVESLCADI (74 aa)) folds into the Death domain.

Binds to EDARADD. Associates with TRAF1, TRAF2, TRAF3 and NIK.

It is found in the membrane. Receptor for EDA isoform TAA, but not for EDA isoform TA-2. May mediate the activation of NF-kappa-B and JNK. May promote caspase-independent cell death. The polypeptide is Tumor necrosis factor receptor superfamily member EDAR (Edar) (Mus musculus (Mouse)).